We begin with the raw amino-acid sequence, 753 residues long: Glycerophosphodiester phosphodiesterase GDPDL6 (753 aa).

An N-terminal signal peptide occupies residues 1 to 17 (MLRFFILFSLFLHSSVA). GP-PDE domains follow at residues 41–339 (PAVV…SQSI) and 355–654 (ALVI…TRYL). N-linked (GlcNAc...) asparagine glycosylation is found at N304, N516, N603, and N715. A disordered region spans residues 707–729 (PPVAKLASNGTEGGPPQTPPRSG). A helical membrane pass occupies residues 731–751 (VAIAANLSLSLLAMMALGLLY).

This sequence belongs to the glycerophosphoryl diester phosphodiesterase family. As to expression, expressed in flowers and siliques.

Its subcellular location is the membrane. It carries out the reaction a sn-glycero-3-phosphodiester + H2O = an alcohol + sn-glycerol 3-phosphate + H(+). This Arabidopsis thaliana (Mouse-ear cress) protein is Glycerophosphodiester phosphodiesterase GDPDL6.